We begin with the raw amino-acid sequence, 100 residues long: Urease subunit gamma (100 aa).

It belongs to the urease gamma subunit family. Heterotrimer of UreA (gamma), UreB (beta) and UreC (alpha) subunits. Three heterotrimers associate to form the active enzyme.

Its subcellular location is the cytoplasm. It catalyses the reaction urea + 2 H2O + H(+) = hydrogencarbonate + 2 NH4(+). It participates in nitrogen metabolism; urea degradation; CO(2) and NH(3) from urea (urease route): step 1/1. The sequence is that of Urease subunit gamma from Yersinia rohdei.